A 124-amino-acid chain; its full sequence is Small ribosomal subunit protein bS6 (124 aa).

The segment at 100–124 is disordered; it reads KERRAARQKTGETQENVSQEESSTN. Positions 110 to 124 are enriched in polar residues; the sequence is GETQENVSQEESSTN.

This sequence belongs to the bacterial ribosomal protein bS6 family.

Functionally, binds together with bS18 to 16S ribosomal RNA. In Fervidobacterium nodosum (strain ATCC 35602 / DSM 5306 / Rt17-B1), this protein is Small ribosomal subunit protein bS6.